We begin with the raw amino-acid sequence, 129 residues long: Small ribosomal subunit protein uS11 (129 aa).

This sequence belongs to the universal ribosomal protein uS11 family. As to quaternary structure, part of the 30S ribosomal subunit. Interacts with proteins S7 and S18. Binds to IF-3.

In terms of biological role, located on the platform of the 30S subunit, it bridges several disparate RNA helices of the 16S rRNA. Forms part of the Shine-Dalgarno cleft in the 70S ribosome. The chain is Small ribosomal subunit protein uS11 from Bartonella quintana (strain Toulouse) (Rochalimaea quintana).